Reading from the N-terminus, the 326-residue chain is Beta-ketoacyl-[acyl-carrier-protein] synthase III (326 aa).

Active-site residues include C120 and H253. The tract at residues Q254–R258 is ACP-binding. N283 is an active-site residue.

The protein belongs to the thiolase-like superfamily. FabH family. In terms of assembly, homodimer.

Its subcellular location is the cytoplasm. It carries out the reaction malonyl-[ACP] + acetyl-CoA + H(+) = 3-oxobutanoyl-[ACP] + CO2 + CoA. The protein operates within lipid metabolism; fatty acid biosynthesis. Functionally, catalyzes the condensation reaction of fatty acid synthesis by the addition to an acyl acceptor of two carbons from malonyl-ACP. Catalyzes the first condensation reaction which initiates fatty acid synthesis and may therefore play a role in governing the total rate of fatty acid production. Possesses both acetoacetyl-ACP synthase and acetyl transacylase activities. Its substrate specificity determines the biosynthesis of branched-chain and/or straight-chain of fatty acids. This is Beta-ketoacyl-[acyl-carrier-protein] synthase III from Ralstonia nicotianae (strain ATCC BAA-1114 / GMI1000) (Ralstonia solanacearum).